The sequence spans 83 residues: Apolipoprotein C-I (83 aa).

An N-terminal signal peptide occupies residues 1–26 (MRLFLSLPVLVVVLSIVLEGPAPAQG).

Belongs to the apolipoprotein C1 family. In terms of tissue distribution, synthesized mainly in liver and to a minor degree in intestine. Also found in the lung and spleen.

The protein localises to the secreted. Functionally, inhibitor of lipoprotein binding to the low density lipoprotein (LDL) receptor, LDL receptor-related protein, and very low density lipoprotein (VLDL) receptor. Associates with high density lipoproteins (HDL) and the triacylglycerol-rich lipoproteins in the plasma and makes up about 10% of the protein of the VLDL and 2% of that of HDL. Appears to interfere directly with fatty acid uptake and is also the major plasma inhibitor of cholesteryl ester transfer protein (CETP). Binds free fatty acids and reduces their intracellular esterification. Modulates the interaction of APOE with beta-migrating VLDL and inhibits binding of beta-VLDL to the LDL receptor-related protein. This is Apolipoprotein C-I (APOC1) from Homo sapiens (Human).